The chain runs to 307 residues: 4-hydroxythreonine-4-phosphate dehydrogenase (307 aa).

Residues His-121 and Thr-122 each coordinate substrate. Residues His-150, His-189, and His-245 each contribute to the a divalent metal cation site. Residues Lys-253, Asn-262, and Arg-271 each coordinate substrate.

This sequence belongs to the PdxA family. In terms of assembly, homodimer. Zn(2+) serves as cofactor. It depends on Mg(2+) as a cofactor. Requires Co(2+) as cofactor.

It is found in the cytoplasm. It carries out the reaction 4-(phosphooxy)-L-threonine + NAD(+) = 3-amino-2-oxopropyl phosphate + CO2 + NADH. It participates in cofactor biosynthesis; pyridoxine 5'-phosphate biosynthesis; pyridoxine 5'-phosphate from D-erythrose 4-phosphate: step 4/5. Functionally, catalyzes the NAD(P)-dependent oxidation of 4-(phosphooxy)-L-threonine (HTP) into 2-amino-3-oxo-4-(phosphooxy)butyric acid which spontaneously decarboxylates to form 3-amino-2-oxopropyl phosphate (AHAP). The sequence is that of 4-hydroxythreonine-4-phosphate dehydrogenase from Sulfurimonas denitrificans (strain ATCC 33889 / DSM 1251) (Thiomicrospira denitrificans (strain ATCC 33889 / DSM 1251)).